We begin with the raw amino-acid sequence, 108 residues long: Thioredoxin (108 aa).

Residues 2–108 (NKIIELTDQN…LKEFLDENIN (107 aa)) enclose the Thioredoxin domain. Cysteine 32 and cysteine 35 are joined by a disulfide.

Belongs to the thioredoxin family.

In terms of biological role, participates in various redox reactions through the reversible oxidation of its active center dithiol to a disulfide and catalyzes dithiol-disulfide exchange reactions. In Buchnera aphidicola subsp. Acyrthosiphon pisum (strain APS) (Acyrthosiphon pisum symbiotic bacterium), this protein is Thioredoxin (trxA).